Reading from the N-terminus, the 704-residue chain is Elongation factor G (704 aa).

One can recognise a tr-type G domain in the interval 8 to 290 (EKYRNIGICA…GVVRYLPAPN (283 aa)). Residues 17-24 (AHVDAGKT), 88-92 (DTPGH), and 142-145 (NKMD) contribute to the GTP site.

The protein belongs to the TRAFAC class translation factor GTPase superfamily. Classic translation factor GTPase family. EF-G/EF-2 subfamily.

The protein localises to the cytoplasm. Catalyzes the GTP-dependent ribosomal translocation step during translation elongation. During this step, the ribosome changes from the pre-translocational (PRE) to the post-translocational (POST) state as the newly formed A-site-bound peptidyl-tRNA and P-site-bound deacylated tRNA move to the P and E sites, respectively. Catalyzes the coordinated movement of the two tRNA molecules, the mRNA and conformational changes in the ribosome. In Francisella tularensis subsp. holarctica (strain LVS), this protein is Elongation factor G.